We begin with the raw amino-acid sequence, 188 residues long: Phospholipase A2 inhibitor 31 kDa subunit (188 aa).

8 cysteine pairs are disulfide-bonded: C3/C27, C6/C13, C20/C48, C54/C75, C76/C81, C99/C124, C117/C146, and C150/C172. N157 carries N-linked (GlcNAc...) asparagine glycosylation.

This sequence belongs to the CNF-like-inhibitor family. Heterodimer with phospholipase A2 inhibitor 25 kDa. In terms of processing, N-glycosylated. Expressed by the liver.

It is found in the secreted. Its function is as follows. Inhibits the enzymatic activity of phospholipase A2. The chain is Phospholipase A2 inhibitor 31 kDa subunit from Naja kaouthia (Monocled cobra).